A 422-amino-acid polypeptide reads, in one-letter code: Serine--tRNA ligase (422 aa).

229 to 231 is an L-serine binding site; the sequence is TAE. ATP-binding positions include 260–262 and valine 276; that span reads RRE. L-serine is bound at residue glutamate 283. Residue 349–352 participates in ATP binding; that stretch reads EVTS. Threonine 384 serves as a coordination point for L-serine.

It belongs to the class-II aminoacyl-tRNA synthetase family. Type-1 seryl-tRNA synthetase subfamily. As to quaternary structure, homodimer. The tRNA molecule binds across the dimer.

The protein resides in the cytoplasm. It carries out the reaction tRNA(Ser) + L-serine + ATP = L-seryl-tRNA(Ser) + AMP + diphosphate + H(+). It catalyses the reaction tRNA(Sec) + L-serine + ATP = L-seryl-tRNA(Sec) + AMP + diphosphate + H(+). Its pathway is aminoacyl-tRNA biosynthesis; selenocysteinyl-tRNA(Sec) biosynthesis; L-seryl-tRNA(Sec) from L-serine and tRNA(Sec): step 1/1. Functionally, catalyzes the attachment of serine to tRNA(Ser). Is also able to aminoacylate tRNA(Sec) with serine, to form the misacylated tRNA L-seryl-tRNA(Sec), which will be further converted into selenocysteinyl-tRNA(Sec). This Treponema denticola (strain ATCC 35405 / DSM 14222 / CIP 103919 / JCM 8153 / KCTC 15104) protein is Serine--tRNA ligase.